The primary structure comprises 257 residues: Acetyl-coenzyme A carboxylase carboxyl transferase subunit beta 1 (257 aa).

In terms of domain architecture, CoA carboxyltransferase N-terminal spans 1–257 (MNINDIFLKR…KMHVNTGGEA (257 aa)).

Belongs to the AccD/PCCB family. As to quaternary structure, acetyl-CoA carboxylase is a heterohexamer composed of biotin carboxyl carrier protein (AccB), biotin carboxylase (AccC) and two subunits each of ACCase subunit alpha (AccA) and ACCase subunit beta (AccD).

Its subcellular location is the cytoplasm. The enzyme catalyses N(6)-carboxybiotinyl-L-lysyl-[protein] + acetyl-CoA = N(6)-biotinyl-L-lysyl-[protein] + malonyl-CoA. Its pathway is lipid metabolism; malonyl-CoA biosynthesis; malonyl-CoA from acetyl-CoA: step 1/1. Its function is as follows. Component of the acetyl coenzyme A carboxylase (ACC) complex. Biotin carboxylase (BC) catalyzes the carboxylation of biotin on its carrier protein (BCCP) and then the CO(2) group is transferred by the transcarboxylase to acetyl-CoA to form malonyl-CoA. The polypeptide is Acetyl-coenzyme A carboxylase carboxyl transferase subunit beta 1 (Lachnospira eligens (strain ATCC 27750 / DSM 3376 / VPI C15-48 / C15-B4) (Eubacterium eligens)).